Consider the following 775-residue polypeptide: 5-methyltetrahydropteroyltriglutamate--homocysteine methyltransferase (775 aa).

5-methyltetrahydropteroyltri-L-glutamate-binding positions include 16–19 (REMK) and Lys115. Residues 435-437 (IGS) and Glu488 each bind L-homocysteine. L-methionine contacts are provided by residues 435–437 (IGS) and Glu488. 5-methyltetrahydropteroyltri-L-glutamate-binding positions include 519–520 (RC) and Trp565. Asp603 contacts L-homocysteine. Residue Asp603 participates in L-methionine binding. Glu609 contributes to the 5-methyltetrahydropteroyltri-L-glutamate binding site. His645, Cys647, and Glu669 together coordinate Zn(2+). The active-site Proton donor is the His698. Residue Cys730 coordinates Zn(2+).

The protein belongs to the vitamin-B12 independent methionine synthase family. Zn(2+) is required as a cofactor.

The enzyme catalyses 5-methyltetrahydropteroyltri-L-glutamate + L-homocysteine = tetrahydropteroyltri-L-glutamate + L-methionine. Its pathway is amino-acid biosynthesis; L-methionine biosynthesis via de novo pathway; L-methionine from L-homocysteine (MetE route): step 1/1. In terms of biological role, catalyzes the transfer of a methyl group from 5-methyltetrahydrofolate to homocysteine resulting in methionine formation. This chain is 5-methyltetrahydropteroyltriglutamate--homocysteine methyltransferase, found in Coxiella burnetii (strain Dugway 5J108-111).